Consider the following 808-residue polypeptide: MSSGQSFSRSLLKLPLSVMVKGTTIPSNPIDDLNIDLTKPIVYALPFRSNVDLLTLQKQAMSLGLPDPLSPLEINGKTLNRFVFIASRPTVMGNDNDIPTDSVSLFTELLELHKLDSELDVQMIPATVLWGRKPGKEESHRPYLQPMNGPQKAKAVMAAGRDCLVRFSPVVSLRYMADSHGTDSAIAHKLARVARIHFSRQKLAASGPNLPQRQVLFARLLKSPAIEQAIEDEAKSKDISIEKARKEAHDIMDEIAADFSYGLVKNGDRILSWLWTKLYQGLHINNASTVRRLAQDGHEIVYVPCHRSHMDYLLLSYVLYHEGMVPPHIAAGINLNFFPAGPIFRRGGAFFIRRSFKGNKLYSTIFREYLAELFAKGYSVEYFSEGGRSRTGRLLQAKTGMLAMTIQAMLRGLNRPVTLVPVYIGYEHVMEVGTYAKELRGKRKEKENAGLVLRTLRKLRNFGLGYVNFGEPIQLNQYLNEHAPEWTKDIDSMGGSKPQWMNPVVNELANKMMTHINDAAAANALTLCATALLASRQRALSRDSLINQIECYLKLLKNNPYSSTSTIPTESAEELVDHAISLDKFVIETDSMGDIISLDRSQSILMTYYRNNIIHLFALPSLIAQMIIRQRNLTVEKIQENVAQIYPFLKKELFLSYQEEDLNDLVVKTLNEFAEQKMICLDGNKLEINQSNNQPLVLLGRTITETLQRYSIAMNLLVAYPELGKSDLEQKSQDIAQRLGRLHGINAPEFFDKGVFTAMFNTLKQQEYLDSDGNCDKKKTQKFAKLLFTLLYPEVKLTIEESIHQLQA.

Positions 306–311 (HRSHMD) match the HXXXXD motif motif.

Belongs to the GPAT/DAPAT family.

It is found in the cell inner membrane. It carries out the reaction sn-glycerol 3-phosphate + an acyl-CoA = a 1-acyl-sn-glycero-3-phosphate + CoA. The protein operates within phospholipid metabolism; CDP-diacylglycerol biosynthesis; CDP-diacylglycerol from sn-glycerol 3-phosphate: step 1/3. This chain is Glycerol-3-phosphate acyltransferase, found in Vibrio parahaemolyticus serotype O3:K6 (strain RIMD 2210633).